The chain runs to 347 residues: Dihydroorotase (347 aa).

Positions 14 and 16 each coordinate Zn(2+). Residues 16-18 (HLR) and N42 each bind substrate. The Zn(2+) site is built by K100, H137, and H175. At K100 the chain carries N6-carboxylysine. Residue H137 participates in substrate binding. Residue L220 coordinates substrate. D248 contacts Zn(2+). The active site involves D248. Substrate contacts are provided by H252 and A264.

It belongs to the metallo-dependent hydrolases superfamily. DHOase family. Class II DHOase subfamily. Homodimer. Zn(2+) is required as a cofactor.

It catalyses the reaction (S)-dihydroorotate + H2O = N-carbamoyl-L-aspartate + H(+). It participates in pyrimidine metabolism; UMP biosynthesis via de novo pathway; (S)-dihydroorotate from bicarbonate: step 3/3. Catalyzes the reversible cyclization of carbamoyl aspartate to dihydroorotate. In Pseudomonas syringae pv. tomato (strain ATCC BAA-871 / DC3000), this protein is Dihydroorotase.